The sequence spans 321 residues: Glucokinase (321 aa).

Gly8–Thr13 lines the ATP pocket.

Belongs to the bacterial glucokinase family.

The protein localises to the cytoplasm. It carries out the reaction D-glucose + ATP = D-glucose 6-phosphate + ADP + H(+). The polypeptide is Glucokinase (Escherichia fergusonii (strain ATCC 35469 / DSM 13698 / CCUG 18766 / IAM 14443 / JCM 21226 / LMG 7866 / NBRC 102419 / NCTC 12128 / CDC 0568-73)).